The following is a 403-amino-acid chain: Alkaline protease 1 (403 aa).

Positions 1–21 are cleaved as a signal peptide; the sequence is MQSIKRTLLLLGAVLPAVLAG. Residues 22-121 constitute a propeptide that is removed on maturation; that stretch reads PIFPHRRAPT…VEEDQVWHLF (100 aa). The Inhibitor I9 domain maps to 36–120; sequence KYIVTFKSDV…AVEEDQVWHL (85 aa). A Peptidase S8 domain is found at 130–403; sequence PWGLGSISHK…PNLLAYNGNA (274 aa). Active-site charge relay system residues include Asp162 and His193. 2 N-linked (GlcNAc...) asparagine glycosylation sites follow: Asn253 and Asn309. The active-site Charge relay system is Ser349.

The protein belongs to the peptidase S8 family.

Its subcellular location is the secreted. The catalysed reaction is Hydrolysis of proteins with broad specificity, and of Bz-Arg-OEt &gt; Ac-Tyr-OEt. Does not hydrolyze peptide amides.. In terms of biological role, secreted alkaline protease that allows assimilation of proteinaceous substrates. This is Alkaline protease 1 (alp1) from Aspergillus flavus.